A 274-amino-acid chain; its full sequence is Envelope glycoprotein L (274 aa).

The signal sequence occupies residues 1–21 (MMPLLLLILLSTRNLLGAAQS). A gL betaherpesvirus-type domain is found at 51–251 (VEHKCREALA…RSYRDRFPAV (201 aa)). A disulfide bridge connects residues Cys156 and Cys161.

It belongs to the herpesviridae glycoprotein L (gL) family. Betaherpesvirinae gL subfamily. As to quaternary structure, interacts with glycoprotein H (gH); this interaction is necessary for the correct processing and cell surface expression of gH.

It localises to the virion membrane. Its subcellular location is the host cell membrane. The protein resides in the host Golgi apparatus. It is found in the host trans-Golgi network. Functionally, the heterodimer glycoprotein H-glycoprotein L is required for the fusion of viral and plasma membranes leading to virus entry into the host cell. Acts as a functional inhibitor of gH and maintains gH in an inhibited form. Upon binding to host integrins, gL dissociates from gH leading to activation of the viral fusion glycoproteins gB and gH. This Mus musculus (Mouse) protein is Envelope glycoprotein L.